The following is a 374-amino-acid chain: Carbamoyl phosphate synthase small chain (374 aa).

The tract at residues 1–186 (MTEPAILVLE…DRNEWKRAAP (186 aa)) is CPSase. Positions 47, 237, and 239 each coordinate L-glutamine. Residues 189 to 374 (KVVAYDYGVK…RFITMMAAQS (186 aa)) form the Glutamine amidotransferase type-1 domain. Cys265 serves as the catalytic Nucleophile. L-glutamine is bound by residues Leu266, Gln269, Asn307, Gly309, and Phe310. Residues His349 and Glu351 contribute to the active site.

This sequence belongs to the CarA family. In terms of assembly, composed of two chains; the small (or glutamine) chain promotes the hydrolysis of glutamine to ammonia, which is used by the large (or ammonia) chain to synthesize carbamoyl phosphate. Tetramer of heterodimers (alpha,beta)4.

The enzyme catalyses hydrogencarbonate + L-glutamine + 2 ATP + H2O = carbamoyl phosphate + L-glutamate + 2 ADP + phosphate + 2 H(+). The catalysed reaction is L-glutamine + H2O = L-glutamate + NH4(+). It participates in amino-acid biosynthesis; L-arginine biosynthesis; carbamoyl phosphate from bicarbonate: step 1/1. The protein operates within pyrimidine metabolism; UMP biosynthesis via de novo pathway; (S)-dihydroorotate from bicarbonate: step 1/3. Small subunit of the glutamine-dependent carbamoyl phosphate synthetase (CPSase). CPSase catalyzes the formation of carbamoyl phosphate from the ammonia moiety of glutamine, carbonate, and phosphate donated by ATP, constituting the first step of 2 biosynthetic pathways, one leading to arginine and/or urea and the other to pyrimidine nucleotides. The small subunit (glutamine amidotransferase) binds and cleaves glutamine to supply the large subunit with the substrate ammonia. In Xylella fastidiosa (strain 9a5c), this protein is Carbamoyl phosphate synthase small chain.